The chain runs to 245 residues: Glutathione S-transferase T1 (245 aa).

One can recognise a GST N-terminal domain in the interval 2-83 (MKLKVYADRM…YLSSAFPSVA (82 aa)). Glutathione-binding positions include 12–13 (SQ), 41–42 (QL), 54–55 (KV), and 67–68 (ES). A GST C-terminal domain is found at 90–233 (DLSKRAKIHS…KEGFQKRREM (144 aa)). The short motif at 243 to 245 (SKI) is the Microbody targeting signal element.

It belongs to the GST superfamily. Theta family.

It is found in the nucleus. The protein resides in the peroxisome. It catalyses the reaction RX + glutathione = an S-substituted glutathione + a halide anion + H(+). In terms of biological role, in vitro, possesses glutathione S-transferase activity toward 1-chloro-2,4-dinitrobenzene (CDNB) and p-nitrobenzyl chloride (pNBC), and glutathione peroxidase activity toward cumene hydroperoxide and linoleic acid-13-hydroperoxide. May be involved in the conjugation of reduced glutathione to a wide number of exogenous and endogenous hydrophobic electrophiles and have a detoxification role against certain herbicides. In Arabidopsis thaliana (Mouse-ear cress), this protein is Glutathione S-transferase T1 (GSTT1).